We begin with the raw amino-acid sequence, 1206 residues long: DNA polymerase beta (1206 aa).

4 repeat units span residues Ala-1071 to Pro-1074, Ala-1075 to Pro-1078, Ala-1079 to Pro-1082, and Ala-1083 to Ala-1086. Positions Ala-1071 to Ala-1086 are 4 X 4 AA tandem repeats of A-G-[NK]-[PA].

It belongs to the DNA polymerase type-B family.

The catalysed reaction is DNA(n) + a 2'-deoxyribonucleoside 5'-triphosphate = DNA(n+1) + diphosphate. In terms of biological role, DNA-directed DNA polymerase involved in viral DNA replication. The protein is DNA polymerase beta of Ornithodoros (relapsing fever ticks).